The sequence spans 228 residues: Ankyrin repeat domain-containing protein 46 (228 aa).

4 ANK repeats span residues Gln11–Ile40, Arg44–Thr74, Gln77–Ile103, and Gln107–Gly138. Residues Val195 to Gly215 form a helical membrane-spanning segment.

The protein localises to the membrane. This is Ankyrin repeat domain-containing protein 46 (Ankrd46) from Mus musculus (Mouse).